The chain runs to 254 residues: HTH-type transcriptional regulator GolR (254 aa).

The region spanning 3 to 58 (PFERQNKIIHLLDQNNKITVPELSRILDVSISTIRNDLSALEESGMIKKVHGGAVL) is the HTH deoR-type domain. Positions 20-39 (ITVPELSRILDVSISTIRND) form a DNA-binding region, H-T-H motif.

Involved in the glycerol metabolism. Repressor of the gol operon for glycerol metabolism. This Listeria innocua serovar 6a (strain ATCC BAA-680 / CLIP 11262) protein is HTH-type transcriptional regulator GolR.